We begin with the raw amino-acid sequence, 321 residues long: Transaldolase (321 aa).

The active-site Schiff-base intermediate with substrate is Lys132.

This sequence belongs to the transaldolase family. Type 1 subfamily. In terms of assembly, homodimer.

Its subcellular location is the cytoplasm. The catalysed reaction is D-sedoheptulose 7-phosphate + D-glyceraldehyde 3-phosphate = D-erythrose 4-phosphate + beta-D-fructose 6-phosphate. The protein operates within carbohydrate degradation; pentose phosphate pathway; D-glyceraldehyde 3-phosphate and beta-D-fructose 6-phosphate from D-ribose 5-phosphate and D-xylulose 5-phosphate (non-oxidative stage): step 2/3. In terms of biological role, transaldolase is important for the balance of metabolites in the pentose-phosphate pathway. The protein is Transaldolase of Marinobacter nauticus (strain ATCC 700491 / DSM 11845 / VT8) (Marinobacter aquaeolei).